Reading from the N-terminus, the 327-residue chain is Putative gluconeogenesis factor (327 aa).

It belongs to the gluconeogenesis factor family.

The protein resides in the cytoplasm. Required for morphogenesis under gluconeogenic growth conditions. The sequence is that of Putative gluconeogenesis factor (yjiF) from Lactococcus lactis subsp. lactis (strain IL1403) (Streptococcus lactis).